The primary structure comprises 293 residues: Ribosomal RNA small subunit methyltransferase A (293 aa).

Positions 38, 40, 65, 86, 116, and 133 each coordinate S-adenosyl-L-methionine.

Belongs to the class I-like SAM-binding methyltransferase superfamily. rRNA adenine N(6)-methyltransferase family. RsmA subfamily.

It localises to the cytoplasm. It carries out the reaction adenosine(1518)/adenosine(1519) in 16S rRNA + 4 S-adenosyl-L-methionine = N(6)-dimethyladenosine(1518)/N(6)-dimethyladenosine(1519) in 16S rRNA + 4 S-adenosyl-L-homocysteine + 4 H(+). In terms of biological role, specifically dimethylates two adjacent adenosines (A1518 and A1519) in the loop of a conserved hairpin near the 3'-end of 16S rRNA in the 30S particle. May play a critical role in biogenesis of 30S subunits. The chain is Ribosomal RNA small subunit methyltransferase A from Paenarthrobacter aurescens (strain TC1).